The sequence spans 84 residues: Trefoil factor 1 (84 aa).

Positions 1–24 (MATMENKVICALVLVSMLALGTLA) are cleaved as a signal peptide. The P-type domain occupies 29-72 (ETCTVAPRERQNCGFPGVTPSQCANKGCCFDDTVRGVPWCFYPN). Intrachain disulfides connect C31-C57, C41-C56, and C51-C68.

In terms of assembly, heterodimer with GKN2; disulfide linked. As to expression, found in stomach, with highest levels in the upper gastric mucosal cells (at protein level). Detected in goblet cells of the small and large intestine and rectum, small submucosal glands in the esophagus, mucous acini of the sublingual gland, submucosal glands of the trachea, and epithelial cells lining the exocrine pancreatic ducts but not in the remainder of the pancreas (at protein level). Scattered expression is detected in the epithelial cells of the gallbladder and submucosal glands of the vagina, and weak expression is observed in the bronchial goblet cells of the pseudostratified epithelia in the respiratory system (at protein level). Detected in urine (at protein level). Strongly expressed in breast cancer but at low levels in normal mammary tissue. It is regulated by estrogen in MCF-7 cells. Strong expression found in normal gastric mucosa and in the regenerative tissues surrounding ulcerous lesions of gastrointestinal tract, but lower expression found in gastric cancer (at protein level).

It localises to the secreted. Functionally, stabilizer of the mucous gel overlying the gastrointestinal mucosa that provides a physical barrier against various noxious agents. May inhibit the growth of calcium oxalate crystals in urine. The chain is Trefoil factor 1 (TFF1) from Homo sapiens (Human).